The following is a 296-amino-acid chain: MTAKRIDGKAFAAGVRARVAEEVARLKEGHGIVPGLAVVLVGEDPASQVYVGAKGKQTVEVGMASFEHRLPAGTSEAELLALIDRLNHDPAVHGILVQLPLPAHLNADLVINALDPAKDVDGFHISNVGRLGTGQKSMVPCTPLGCLMMLRDHLGALSGLNAVVVGRSNIVGKPMAQLLLGESCTVTIAHSRTRDLAAVCRGADILVAAVGRPEMITGDFVKPGATVIDVGINRIERDGKTKLVGDVDYASAAEVAGAITPVPGGVGPMTIACLLANTLTACCRANGLPEPQGLTA.

Residues 166-168, Ser-191, and Ile-232 each bind NADP(+); that span reads GRS.

It belongs to the tetrahydrofolate dehydrogenase/cyclohydrolase family. As to quaternary structure, homodimer.

It catalyses the reaction (6R)-5,10-methylene-5,6,7,8-tetrahydrofolate + NADP(+) = (6R)-5,10-methenyltetrahydrofolate + NADPH. It carries out the reaction (6R)-5,10-methenyltetrahydrofolate + H2O = (6R)-10-formyltetrahydrofolate + H(+). It participates in one-carbon metabolism; tetrahydrofolate interconversion. Catalyzes the oxidation of 5,10-methylenetetrahydrofolate to 5,10-methenyltetrahydrofolate and then the hydrolysis of 5,10-methenyltetrahydrofolate to 10-formyltetrahydrofolate. This Cereibacter sphaeroides (strain ATCC 17023 / DSM 158 / JCM 6121 / CCUG 31486 / LMG 2827 / NBRC 12203 / NCIMB 8253 / ATH 2.4.1.) (Rhodobacter sphaeroides) protein is Bifunctional protein FolD.